We begin with the raw amino-acid sequence, 284 residues long: D-tagatose-1,6-bisphosphate aldolase subunit GatY (284 aa).

The Proton donor role is filled by D82. Residues H83 and H180 each coordinate Zn(2+). G181 contributes to the dihydroxyacetone phosphate binding site. H208 is a Zn(2+) binding site. Dihydroxyacetone phosphate is bound by residues 209–211 and 230–233; these read GAS and NVAT.

It belongs to the class II fructose-bisphosphate aldolase family. TagBP aldolase GatY subfamily. Forms a complex with GatZ. Requires Zn(2+) as cofactor.

It catalyses the reaction D-tagatofuranose 1,6-bisphosphate = D-glyceraldehyde 3-phosphate + dihydroxyacetone phosphate. It functions in the pathway carbohydrate metabolism; D-tagatose 6-phosphate degradation; D-glyceraldehyde 3-phosphate and glycerone phosphate from D-tagatose 6-phosphate: step 2/2. Functionally, catalytic subunit of the tagatose-1,6-bisphosphate aldolase GatYZ, which catalyzes the reversible aldol condensation of dihydroxyacetone phosphate (DHAP or glycerone-phosphate) with glyceraldehyde 3-phosphate (G3P) to produce tagatose 1,6-bisphosphate (TBP). Requires GatZ subunit for full activity and stability. Is involved in the catabolism of galactitol. The polypeptide is D-tagatose-1,6-bisphosphate aldolase subunit GatY (Salmonella newport (strain SL254)).